Consider the following 176-residue polypeptide: NAD(P)H-quinone oxidoreductase subunit 6, chloroplastic (176 aa).

5 helical membrane passes run 10-30 (FLLV…VLLT), 32-52 (PIFS…FHIP), 60-80 (AAQL…AVMF), 107-127 (IFVS…IWTT), and 152-172 (FFLP…GAIA).

The protein belongs to the complex I subunit 6 family. In terms of assembly, NDH is composed of at least 16 different subunits, 5 of which are encoded in the nucleus.

The protein resides in the plastid. It is found in the chloroplast thylakoid membrane. It catalyses the reaction a plastoquinone + NADH + (n+1) H(+)(in) = a plastoquinol + NAD(+) + n H(+)(out). It carries out the reaction a plastoquinone + NADPH + (n+1) H(+)(in) = a plastoquinol + NADP(+) + n H(+)(out). Functionally, NDH shuttles electrons from NAD(P)H:plastoquinone, via FMN and iron-sulfur (Fe-S) centers, to quinones in the photosynthetic chain and possibly in a chloroplast respiratory chain. The immediate electron acceptor for the enzyme in this species is believed to be plastoquinone. Couples the redox reaction to proton translocation, and thus conserves the redox energy in a proton gradient. The polypeptide is NAD(P)H-quinone oxidoreductase subunit 6, chloroplastic (ndhG) (Buxus microphylla (Littleleaf boxwood)).